The following is a 701-amino-acid chain: Polyribonucleotide nucleotidyltransferase (701 aa).

Mg(2+)-binding residues include D485 and D491. One can recognise a KH domain in the interval 552 to 611; it reads PKIFKTTVDPEKIRDIIGPGGKMINKIIAKTNVKIDIEPDGRIFVAAPDDISGNRAISMI. In terms of domain architecture, S1 motif spans 621 to 689; sequence GQFFLGKVTR…RLGRIALSRK (69 aa).

It belongs to the polyribonucleotide nucleotidyltransferase family. Mg(2+) serves as cofactor.

It is found in the cytoplasm. It catalyses the reaction RNA(n+1) + phosphate = RNA(n) + a ribonucleoside 5'-diphosphate. Involved in mRNA degradation. Catalyzes the phosphorolysis of single-stranded polyribonucleotides processively in the 3'- to 5'-direction. The protein is Polyribonucleotide nucleotidyltransferase of Caldicellulosiruptor saccharolyticus (strain ATCC 43494 / DSM 8903 / Tp8T 6331).